The chain runs to 492 residues: Glutamyl-tRNA(Gln) amidotransferase subunit A (492 aa).

Active-site charge relay system residues include Lys79 and Ser154. Catalysis depends on Ser178, which acts as the Acyl-ester intermediate.

It belongs to the amidase family. GatA subfamily. Heterotrimer of A, B and C subunits.

It carries out the reaction L-glutamyl-tRNA(Gln) + L-glutamine + ATP + H2O = L-glutaminyl-tRNA(Gln) + L-glutamate + ADP + phosphate + H(+). Functionally, allows the formation of correctly charged Gln-tRNA(Gln) through the transamidation of misacylated Glu-tRNA(Gln) in organisms which lack glutaminyl-tRNA synthetase. The reaction takes place in the presence of glutamine and ATP through an activated gamma-phospho-Glu-tRNA(Gln). This Acinetobacter baylyi (strain ATCC 33305 / BD413 / ADP1) protein is Glutamyl-tRNA(Gln) amidotransferase subunit A.